Consider the following 42-residue polypeptide: Crotamine-IV-2 (42 aa).

Cystine bridges form between cysteine 4–cysteine 37, cysteine 11–cysteine 31, and cysteine 19–cysteine 38.

The protein belongs to the crotamine-myotoxin family. Monomer. In terms of tissue distribution, expressed by the venom gland.

The protein resides in the secreted. Cationic peptide that possesses multiple functions. It acts as a cell-penetrating peptide (CPP), and as a potent voltage-gated potassium channel (Kv) inhibitor. It exhibits antimicrobial activities, and hind limb paralysis. It also induces potent blockade of neuromuscular transmission in young chicken biventer cervicis preparation and potent myotoxic effect. In vivo, induces myonecrosis, upon intramuscular or subcutaneous injections into mice. The sequence is that of Crotamine-IV-2 from Crotalus durissus cumanensis (South American rattlesnake).